The sequence spans 227 residues: Large ribosomal subunit protein bL25 (227 aa).

The interval 1 to 22 is disordered; that stretch reads MAETKTLAAAARHGTGKGAARS.

The protein belongs to the bacterial ribosomal protein bL25 family. CTC subfamily. As to quaternary structure, part of the 50S ribosomal subunit; part of the 5S rRNA/L5/L18/L25 subcomplex. Contacts the 5S rRNA. Binds to the 5S rRNA independently of L5 and L18.

This is one of the proteins that binds to the 5S RNA in the ribosome where it forms part of the central protuberance. This is Large ribosomal subunit protein bL25 from Methylocella silvestris (strain DSM 15510 / CIP 108128 / LMG 27833 / NCIMB 13906 / BL2).